The primary structure comprises 131 residues: Small ribosomal subunit protein uS8 (131 aa).

The protein belongs to the universal ribosomal protein uS8 family. As to quaternary structure, part of the 30S ribosomal subunit. Contacts proteins S5 and S12.

Functionally, one of the primary rRNA binding proteins, it binds directly to 16S rRNA central domain where it helps coordinate assembly of the platform of the 30S subunit. In Helicobacter acinonychis (strain Sheeba), this protein is Small ribosomal subunit protein uS8.